The chain runs to 199 residues: Pyridoxine/pyridoxamine 5'-phosphate oxidase (199 aa).

Residues 44 to 49 (RTVLLK), 59 to 60 (YS), K66, and Q91 contribute to the FMN site. K49 contributes to the substrate binding site. Substrate is bound by residues Y109, R113, and S117. FMN is bound by residues 126-127 (QS) and W171. 177–179 (RLH) provides a ligand contact to substrate. R181 contributes to the FMN binding site.

This sequence belongs to the pyridoxamine 5'-phosphate oxidase family. In terms of assembly, homodimer. FMN serves as cofactor.

The enzyme catalyses pyridoxamine 5'-phosphate + O2 + H2O = pyridoxal 5'-phosphate + H2O2 + NH4(+). It carries out the reaction pyridoxine 5'-phosphate + O2 = pyridoxal 5'-phosphate + H2O2. It functions in the pathway cofactor metabolism; pyridoxal 5'-phosphate salvage; pyridoxal 5'-phosphate from pyridoxamine 5'-phosphate: step 1/1. It participates in cofactor metabolism; pyridoxal 5'-phosphate salvage; pyridoxal 5'-phosphate from pyridoxine 5'-phosphate: step 1/1. Functionally, catalyzes the oxidation of either pyridoxine 5'-phosphate (PNP) or pyridoxamine 5'-phosphate (PMP) into pyridoxal 5'-phosphate (PLP). The sequence is that of Pyridoxine/pyridoxamine 5'-phosphate oxidase from Xanthomonas oryzae pv. oryzae (strain KACC10331 / KXO85).